The sequence spans 446 residues: Signal recognition particle protein (446 aa).

GTP contacts are provided by residues 108-115 (GLQGAGKT), 191-195 (DTAGR), and 249-252 (TKLD).

It belongs to the GTP-binding SRP family. SRP54 subfamily. As to quaternary structure, part of the signal recognition particle protein translocation system, which is composed of SRP and FtsY. Interacts with a small cytoplasmic RNA (sc-RNA).

The protein resides in the cytoplasm. The catalysed reaction is GTP + H2O = GDP + phosphate + H(+). Its function is as follows. Involved in targeting and insertion of nascent membrane proteins into the cytoplasmic membrane. Binds to the hydrophobic signal sequence of the ribosome-nascent chain (RNC) as it emerges from the ribosomes. The SRP-RNC complex is then targeted to the cytoplasmic membrane where it interacts with the SRP receptor FtsY. Interaction with FtsY leads to the transfer of the RNC complex to the Sec translocase for insertion into the membrane, the hydrolysis of GTP by both Ffh and FtsY, and the dissociation of the SRP-FtsY complex into the individual components. This chain is Signal recognition particle protein, found in Bacillus subtilis (strain 168).